A 464-amino-acid polypeptide reads, in one-letter code: Asparagine--tRNA ligase (464 aa).

The protein belongs to the class-II aminoacyl-tRNA synthetase family. As to quaternary structure, homodimer.

It is found in the cytoplasm. The enzyme catalyses tRNA(Asn) + L-asparagine + ATP = L-asparaginyl-tRNA(Asn) + AMP + diphosphate + H(+). The chain is Asparagine--tRNA ligase from Xanthomonas euvesicatoria pv. vesicatoria (strain 85-10) (Xanthomonas campestris pv. vesicatoria).